Reading from the N-terminus, the 71-residue chain is NAD(P)H-quinone oxidoreductase subunit O (71 aa).

This sequence belongs to the complex I NdhO subunit family. NDH-1 can be composed of about 15 different subunits; different subcomplexes with different compositions have been identified which probably have different functions.

The protein localises to the cellular thylakoid membrane. It catalyses the reaction a plastoquinone + NADH + (n+1) H(+)(in) = a plastoquinol + NAD(+) + n H(+)(out). The catalysed reaction is a plastoquinone + NADPH + (n+1) H(+)(in) = a plastoquinol + NADP(+) + n H(+)(out). Its function is as follows. NDH-1 shuttles electrons from an unknown electron donor, via FMN and iron-sulfur (Fe-S) centers, to quinones in the respiratory and/or the photosynthetic chain. The immediate electron acceptor for the enzyme in this species is believed to be plastoquinone. Couples the redox reaction to proton translocation, and thus conserves the redox energy in a proton gradient. Cyanobacterial NDH-1 also plays a role in inorganic carbon-concentration. The protein is NAD(P)H-quinone oxidoreductase subunit O of Picosynechococcus sp. (strain ATCC 27264 / PCC 7002 / PR-6) (Agmenellum quadruplicatum).